A 303-amino-acid polypeptide reads, in one-letter code: Major fimbrium anchoring subunit FimB (303 aa).

The first 22 residues, 1–22 (MNDAKKYIVSVLILLVAGMFGG), serve as a signal peptide directing secretion. A lipid anchor (N-palmitoyl cysteine) is attached at Cys23. Residue Cys23 is the site of S-diacylglycerol cysteine attachment.

The protein belongs to the bacteroidetes fimbrillin superfamily. FimB/Mfa2 family. In terms of assembly, fimB is not part of the fimbrium itself, but anchors the fimbrium in the outer membrane. Linear, head-to-tail oligomerization of fimbrial subunits mediates assembly of the fimbrium stalk, while the minor components FimC, FimD and FimE probably form the fimbrium tip. The anchoring subunit FimB limits fimbrium length and is important for solid fimbrium attachment to the outer membrane. In its absence, the major fimbriae become very long and are easily detached from the membrane.

Its subcellular location is the cell outer membrane. In terms of biological role, anchoring subunit of the major fimbriae. Regulates fimbrial length. These filamentous pili are attached to the cell surface; they mediate biofilm formation, adhesion onto host cells and onto other bacteria that are part of the oral microbiome. Fimbriae of P.gingivalis are major virulence factors. The sequence is that of Major fimbrium anchoring subunit FimB from Porphyromonas gingivalis (strain ATCC BAA-308 / W83).